Reading from the N-terminus, the 693-residue chain is MGRDFSLKNTRNIGIMAHIDAGKTTTTERILYYTGRIHKIGETHEGASQMDWMEQEQDRGITITSAATTAEWKNHRVNIIDTPGHVDFTVEVERSLRVLDGAVTVLDAQSGVEPQTETVWRQATTYGVPRIVFVNKMDKIGANFDYAVSTLHDRLQANAAPIQLPIGAEDEFSAIIDLVTMKCFKYNNDLGTEIEEVEIPEDYRERAEEAREALIEAVAETNESLMEKIFDEQEITVDELKDAIRQATTDVEFYPVLCGTAFKNKGVQLMLDAVIDYLPSPLDVKPIVGHRADNPDEEVIAKADDDAEFAALAFKVMTDPYVGKLTFFRVYSGTLTSGSYVKNSTKGKRERVGRILQMHANSREEISSVYSGDIAAAVGLKDTGTGDTLCGEKNDIILESMEFPEPVIHLSVEPKSKADQDKMTQALVKLQEEDPTFKAHTDEETGQVIIGGMGELHLDIIVDRMKKEFNVEANVGAPMVSYRETFKTSAAVQGKFSRQSGGRGQYGDVHIEFTPNETGAGFEFENAIVGGVVPREYIPSVEQGLKDAMENGVLAGYPLIDVKAKLFDGSYHDVDSSEMAFKIAASLALKEAAKKCDPVILEPMMKVTIEMPEEYMGDIMGDVTARRGRVDGMEPRGNAQVVNAYVPLSEMFGYATSLRSNTQGRGTYTMYFDHYAEVPKSISEEIIKKNKGE.

The 275-residue stretch at 8 to 282 (KNTRNIGIMA…AVIDYLPSPL (275 aa)) folds into the tr-type G domain. GTP-binding positions include 17 to 24 (AHIDAGKT), 81 to 85 (DTPGH), and 135 to 138 (NKMD).

Belongs to the TRAFAC class translation factor GTPase superfamily. Classic translation factor GTPase family. EF-G/EF-2 subfamily.

It is found in the cytoplasm. In terms of biological role, catalyzes the GTP-dependent ribosomal translocation step during translation elongation. During this step, the ribosome changes from the pre-translocational (PRE) to the post-translocational (POST) state as the newly formed A-site-bound peptidyl-tRNA and P-site-bound deacylated tRNA move to the P and E sites, respectively. Catalyzes the coordinated movement of the two tRNA molecules, the mRNA and conformational changes in the ribosome. The sequence is that of Elongation factor G from Staphylococcus intermedius.